Consider the following 330-residue polypeptide: Biotin synthase (330 aa).

Positions 53–276 constitute a Radical SAM core domain; it reads NNIRLNVLLS…VFPFKELRLS (224 aa). [4Fe-4S] cluster-binding residues include Cys-68, Cys-72, and Cys-75. Residues Cys-112, Cys-144, Cys-204, and Arg-274 each coordinate [2Fe-2S] cluster.

It belongs to the radical SAM superfamily. Biotin synthase family. Homodimer. [4Fe-4S] cluster is required as a cofactor. [2Fe-2S] cluster serves as cofactor.

The catalysed reaction is (4R,5S)-dethiobiotin + (sulfur carrier)-SH + 2 reduced [2Fe-2S]-[ferredoxin] + 2 S-adenosyl-L-methionine = (sulfur carrier)-H + biotin + 2 5'-deoxyadenosine + 2 L-methionine + 2 oxidized [2Fe-2S]-[ferredoxin]. The protein operates within cofactor biosynthesis; biotin biosynthesis; biotin from 7,8-diaminononanoate: step 2/2. Its function is as follows. Catalyzes the conversion of dethiobiotin (DTB) to biotin by the insertion of a sulfur atom into dethiobiotin via a radical-based mechanism. In Streptococcus agalactiae serotype V (strain ATCC BAA-611 / 2603 V/R), this protein is Biotin synthase.